We begin with the raw amino-acid sequence, 104 residues long: MVNVPKTRKTYCSNKCKKHTMHKVSQYKKGKERLSSLGRRRYDMKQKGFGGQTKPVFKKKAKTTKKIVLKLECTKCKKKRFQTMKRCKTFEMGADKKKKGGAVY.

The protein belongs to the eukaryotic ribosomal protein eL42 family. Component of the large ribosomal subunit. Mature ribosomes consist of a small (40S) and a large (60S) subunit. The 40S subunit contains about 32 different proteins and 1 molecule of RNA (18S). The 60S subunit contains about 42 different proteins and 3 molecules of RNA (28S, 5.8S and 5S).

The protein localises to the cytoplasm. Component of the ribosome, a large ribonucleoprotein complex responsible for the synthesis of proteins in the cell. The small ribosomal subunit (SSU) binds messenger RNAs (mRNAs) and translates the encoded message by selecting cognate aminoacyl-transfer RNA (tRNA) molecules. The large subunit (LSU) contains the ribosomal catalytic site termed the peptidyl transferase center (PTC), which catalyzes the formation of peptide bonds, thereby polymerizing the amino acids delivered by tRNAs into a polypeptide chain. The nascent polypeptides leave the ribosome through a tunnel in the LSU and interact with protein factors that function in enzymatic processing, targeting, and the membrane insertion of nascent chains at the exit of the ribosomal tunnel. In Plasmodium falciparum (isolate 3D7), this protein is Large ribosomal subunit protein eL42.